Reading from the N-terminus, the 311-residue chain is Pyrimidine-specific ribonucleoside hydrolase RihA (311 aa).

His240 is an active-site residue.

This sequence belongs to the IUNH family. RihA subfamily.

Functionally, hydrolyzes cytidine or uridine to ribose and cytosine or uracil, respectively. In Shigella flexneri serotype 5b (strain 8401), this protein is Pyrimidine-specific ribonucleoside hydrolase RihA.